We begin with the raw amino-acid sequence, 859 residues long: Homeobox-leucine zipper protein HOX32 (859 aa).

The segment at 7–31 is disordered; it reads AAVHGVGRQDRSSPGGGGAPQVDTG. A DNA-binding region (homeobox) is located at residues 29–92; the sequence is DTGKYVRYTP…NRRCREKQRK (64 aa). A coiled-coil region spans residues 100 to 129; the sequence is VNRKLTAMNKLLMEENDRLQKQVSRLVYEN. The span at 146–164 shows a compositional bias: polar residues; sequence TSCESVVTSGQHHQQQNPA. The disordered stretch occupies residues 146–172; the sequence is TSCESVVTSGQHHQQQNPAATRPQRDA. The START domain occupies 171–393; sequence DANNPAGLLA…LRHIRQIAHE (223 aa).

The protein belongs to the HD-ZIP homeobox family. Class III subfamily. As to expression, expressed in seedlings, roots, stems, leaf sheaths and blades and panicles.

The protein resides in the nucleus. In terms of biological role, probable transcription factor. This Oryza sativa subsp. japonica (Rice) protein is Homeobox-leucine zipper protein HOX32 (HOX32).